A 732-amino-acid chain; its full sequence is 1,4-alpha-glucan branching enzyme GlgB 1 (732 aa).

The Nucleophile role is filled by aspartate 411. The active-site Proton donor is glutamate 464.

This sequence belongs to the glycosyl hydrolase 13 family. GlgB subfamily. As to quaternary structure, monomer.

It carries out the reaction Transfers a segment of a (1-&gt;4)-alpha-D-glucan chain to a primary hydroxy group in a similar glucan chain.. Its pathway is glycan biosynthesis; glycogen biosynthesis. Catalyzes the formation of the alpha-1,6-glucosidic linkages in glycogen by scission of a 1,4-alpha-linked oligosaccharide from growing alpha-1,4-glucan chains and the subsequent attachment of the oligosaccharide to the alpha-1,6 position. The protein is 1,4-alpha-glucan branching enzyme GlgB 1 of Xanthomonas oryzae pv. oryzae (strain KACC10331 / KXO85).